The primary structure comprises 506 residues: Aminoaldehyde dehydrogenase 1b (506 aa).

Aspartate 102 is a binding site for Na(+). NAD(+) contacts are provided by residues 162-164 (TPW) and 188-191 (KPSE). Position 192 (leucine 192) interacts with Na(+). Residues 242 to 245 (SFET) and glutamate 263 contribute to the NAD(+) site. Glutamate 263 acts as the Proton acceptor in catalysis. Cysteine 297 functions as the Nucleophile in the catalytic mechanism. Residues glutamate 396 and tryptophan 462 each contribute to the NAD(+) site.

The protein belongs to the aldehyde dehydrogenase family.

It carries out the reaction 4-aminobutanal + NAD(+) + H2O = 4-aminobutanoate + NADH + 2 H(+). It catalyses the reaction 3-aminopropanal + NAD(+) + H2O = beta-alanine + NADH + 2 H(+). The enzyme catalyses 4-(trimethylamino)butanal + NAD(+) + H2O = 4-(trimethylamino)butanoate + NADH + 2 H(+). The catalysed reaction is 4-guanidinobutanal + NAD(+) + H2O = 4-guanidinobutanoate + NADH + 2 H(+). It carries out the reaction betaine aldehyde + NAD(+) + H2O = glycine betaine + NADH + 2 H(+). Its pathway is amine and polyamine biosynthesis; betaine biosynthesis via choline pathway; betaine from betaine aldehyde: step 1/1. Its function is as follows. Dehydrogenase that catalyzes the oxidation of several aminoaldehydes. Metabolizes and detoxifies aldehyde products of polyamine degradation to non-toxic amino acids. Catalyzes the oxidation of 4-aminobutanal and 3-aminopropanal to 4-aminobutanoate and beta-alanine, respectively. Catalyzes the oxidation of 4-(trimethylamino)butanal and 4-guanidinobutanal to 4-trimethylammoniobutanoate and 4-guanidinobutanoate, respectively. Catalyzes the oxidation of betaine aldehyde to glycine betaine. The protein is Aminoaldehyde dehydrogenase 1b of Zea mays (Maize).